The primary structure comprises 433 residues: B3 domain-containing protein Os04g0676600 (433 aa).

Disordered stretches follow at residues 1 to 29 (MADT…GGGQ) and 216 to 283 (FPPV…NSAN). Over residues 13–24 (GDDRGREGHDDF) the composition is skewed to basic and acidic residues. A compositionally biased stretch (low complexity) spans 216-229 (FPPVSSSSRSFSSA). Over residues 237 to 265 (DAKKAKKSDIKDQPIVLRRSDTESEKNDE) the composition is skewed to basic and acidic residues. Residues 269–283 (TPASEPSSMSHNSAN) are compositionally biased toward polar residues. A DNA-binding region (TF-B3) is located at residues 297-399 (LRKELTNSDV…KLVVRGEKAI (103 aa)).

Its subcellular location is the nucleus. Functionally, probable transcription regulator that binds specifically to the DNA sequence 5'-CATGC-3' of the IDE1 element found in the promoter of the barley iron deficiency-inducible gene IDS2. The chain is B3 domain-containing protein Os04g0676600 from Oryza sativa subsp. japonica (Rice).